Consider the following 336-residue polypeptide: Ketol-acid reductoisomerase (NADP(+)) (336 aa).

Residues 1-182 form the KARI N-terminal Rossmann domain; that stretch reads MAVIYYDKDA…GVTRAGVIET (182 aa). NADP(+) is bound by residues 25 to 28, Arg48, Ser51, Ser53, and 83 to 86; these read FGSQ and DEHQ. Residue His108 is part of the active site. Gly134 contacts NADP(+). Residues 183–328 form the KARI C-terminal knotted domain; sequence TFKEETETDL…KELRKMMPWL (146 aa). The Mg(2+) site is built by Asp191, Glu195, Glu227, and Glu231. Substrate is bound at residue Ser252.

It belongs to the ketol-acid reductoisomerase family. Mg(2+) is required as a cofactor.

The enzyme catalyses (2R)-2,3-dihydroxy-3-methylbutanoate + NADP(+) = (2S)-2-acetolactate + NADPH + H(+). It catalyses the reaction (2R,3R)-2,3-dihydroxy-3-methylpentanoate + NADP(+) = (S)-2-ethyl-2-hydroxy-3-oxobutanoate + NADPH + H(+). The protein operates within amino-acid biosynthesis; L-isoleucine biosynthesis; L-isoleucine from 2-oxobutanoate: step 2/4. Its pathway is amino-acid biosynthesis; L-valine biosynthesis; L-valine from pyruvate: step 2/4. Functionally, involved in the biosynthesis of branched-chain amino acids (BCAA). Catalyzes an alkyl-migration followed by a ketol-acid reduction of (S)-2-acetolactate (S2AL) to yield (R)-2,3-dihydroxy-isovalerate. In the isomerase reaction, S2AL is rearranged via a Mg-dependent methyl migration to produce 3-hydroxy-3-methyl-2-ketobutyrate (HMKB). In the reductase reaction, this 2-ketoacid undergoes a metal-dependent reduction by NADPH to yield (R)-2,3-dihydroxy-isovalerate. The protein is Ketol-acid reductoisomerase (NADP(+)) of Thermotoga neapolitana (strain ATCC 49049 / DSM 4359 / NBRC 107923 / NS-E).